The primary structure comprises 392 residues: Antitrypsin (392 aa).

Positions 1–16 are cleaved as a signal peptide; that stretch reads MKTIICLFTIAIAAMA.

Belongs to the serpin family. As to expression, hemolymph.

The protein localises to the secreted. Its function is as follows. May play a role in the prophenoloxidase activating system in the silkworm hemolymph. This Bombyx mori (Silk moth) protein is Antitrypsin.